Here is a 354-residue protein sequence, read N- to C-terminus: Carbamoyl phosphate synthase small chain (354 aa).

The interval 1–167 (MEAVLILEDG…KEPKIHKTAN (167 aa)) is CPSase. Residues serine 45, glycine 219, and glycine 221 each coordinate L-glutamine. In terms of domain architecture, Glutamine amidotransferase type-1 spans 171–354 (RCVLIDCGVK…DEMIKLKDRK (184 aa)). Residue cysteine 246 is the Nucleophile of the active site. 5 residues coordinate L-glutamine: leucine 247, glutamine 250, asparagine 288, glycine 290, and phenylalanine 291. Active-site residues include histidine 330 and glutamate 332.

It belongs to the CarA family. As to quaternary structure, composed of two chains; the small (or glutamine) chain promotes the hydrolysis of glutamine to ammonia, which is used by the large (or ammonia) chain to synthesize carbamoyl phosphate. Tetramer of heterodimers (alpha,beta)4.

The enzyme catalyses hydrogencarbonate + L-glutamine + 2 ATP + H2O = carbamoyl phosphate + L-glutamate + 2 ADP + phosphate + 2 H(+). It catalyses the reaction L-glutamine + H2O = L-glutamate + NH4(+). It participates in amino-acid biosynthesis; L-arginine biosynthesis; carbamoyl phosphate from bicarbonate: step 1/1. It functions in the pathway pyrimidine metabolism; UMP biosynthesis via de novo pathway; (S)-dihydroorotate from bicarbonate: step 1/3. Its function is as follows. Small subunit of the glutamine-dependent carbamoyl phosphate synthetase (CPSase). CPSase catalyzes the formation of carbamoyl phosphate from the ammonia moiety of glutamine, carbonate, and phosphate donated by ATP, constituting the first step of 2 biosynthetic pathways, one leading to arginine and/or urea and the other to pyrimidine nucleotides. The small subunit (glutamine amidotransferase) binds and cleaves glutamine to supply the large subunit with the substrate ammonia. The protein is Carbamoyl phosphate synthase small chain of Methanocaldococcus jannaschii (strain ATCC 43067 / DSM 2661 / JAL-1 / JCM 10045 / NBRC 100440) (Methanococcus jannaschii).